A 766-amino-acid polypeptide reads, in one-letter code: EMILIN-3 (766 aa).

Residues 1-22 (MGRRRLLVWLCAVAALLSGAQA) form the signal peptide. Residues 55-131 (HKALCAYVVH…PGFTGKRCPE (77 aa)) form the EMI domain. Intrachain disulfides connect Cys-59-Cys-121, Cys-86-Cys-92, and Cys-120-Cys-129. N-linked (GlcNAc...) asparagine glycosylation occurs at Asn-66. Positions 132-179 (HLTDHGAASPQLEPEPQIPSGQLDPGPRPPSYSRAAPSPHGRKGPGLF) are disordered. The N-linked (GlcNAc...) asparagine glycan is linked to Asn-443. Residues 467–491 (GTMLEERVQSLEERLATLAGELSHD) adopt a coiled-coil conformation. Residues Asn-562, Asn-616, and Asn-732 are each glycosylated (N-linked (GlcNAc...) asparagine). 2 coiled-coil regions span residues 615-663 (ANTS…QLKA) and 726-761 (SHVD…EQVR).

Its subcellular location is the secreted. The protein localises to the extracellular space. It localises to the extracellular matrix. The polypeptide is EMILIN-3 (EMILIN3) (Homo sapiens (Human)).